Consider the following 484-residue polypeptide: UDP-N-acetylmuramate--L-alanine ligase (484 aa).

123–129 contributes to the ATP binding site; the sequence is GTHGKTT.

The protein belongs to the MurCDEF family.

The protein resides in the cytoplasm. The enzyme catalyses UDP-N-acetyl-alpha-D-muramate + L-alanine + ATP = UDP-N-acetyl-alpha-D-muramoyl-L-alanine + ADP + phosphate + H(+). Its pathway is cell wall biogenesis; peptidoglycan biosynthesis. In terms of biological role, cell wall formation. The protein is UDP-N-acetylmuramate--L-alanine ligase of Pseudomonas fluorescens (strain ATCC BAA-477 / NRRL B-23932 / Pf-5).